The chain runs to 465 residues: MAFNDDNFMLKNEAAKRLYQQIKDQPIFDYHCHLDPKEIFEDKVYDNIVDLWLGGDHYKWRLMRANGISEEEITGSASKLDKFKAFARTLQRSYGNPVYHWSVMELKNVFGVCELLTEDNAEEIYHRINAYLVEHQISPRKLIADSLVRFIGTTDHPLDDLAWHKRLAADDTFETVVAPTFRPDEAFIEHQCFADFVARLAQATGRTITDFKSFIAAMEERIAYFAENGCKASDISFTEIVFEAAEPEQLDHLMTRVLEGYQPQPLEIKQWQTAVFAELCRVYKHYGFVTQVHFGALRNNHSAIFNKLGADVGVDSLGDQAALAINMNRLLDHLVQRDSLPKMIWYNLNPSYNITVANTLANFQANENGIAGYLQFGAGWWFADTKLGMISQMNALAEQGLLANFVGMLTDSRSFLSYQRHDYFRRILSTYLGEWIEEGEVPEDYQALGSMAKDIAYNNAIQYFS.

The protein belongs to the metallo-dependent hydrolases superfamily. Uronate isomerase family.

The enzyme catalyses D-glucuronate = D-fructuronate. It catalyses the reaction aldehydo-D-galacturonate = keto-D-tagaturonate. It participates in carbohydrate metabolism; pentose and glucuronate interconversion. The protein is Uronate isomerase of Streptococcus equi subsp. zooepidemicus (strain H70).